The following is a 243-amino-acid chain: Orotidine 5'-phosphate decarboxylase (243 aa).

Residues Asp19, Lys41, 69–78 (DLKFFDIPAT), Thr124, Arg185, Gln194, Gly214, and Arg215 contribute to the substrate site. Catalysis depends on Lys71, which acts as the Proton donor.

It belongs to the OMP decarboxylase family. Type 1 subfamily. In terms of assembly, homodimer.

It catalyses the reaction orotidine 5'-phosphate + H(+) = UMP + CO2. It participates in pyrimidine metabolism; UMP biosynthesis via de novo pathway; UMP from orotate: step 2/2. In terms of biological role, catalyzes the decarboxylation of orotidine 5'-monophosphate (OMP) to uridine 5'-monophosphate (UMP). This Xanthomonas axonopodis pv. citri (strain 306) protein is Orotidine 5'-phosphate decarboxylase.